Reading from the N-terminus, the 1294-residue chain is MAMGDDKSFDDEESVDGNRPSSAASAFKVPAPKTSGNPANSARKPGSAGGPKVGGASKEGGAGAVDEDDFIKAFTDVPSIQIYSSRELEETLNKIREILSDDKHDWDQRANALKKIRSLLVAGAAQYDCFFQHLRLLDGALKLSAKDLRSQVVREACITVAHLSTVLGNKFDHGAEAIVPTLFNLVPNSAKVMATSGCAAIRFIIRHTHVPRLIPLITSNCTSKSVPVRRRSFEFLDLLLQEWQTHSLERHAAVLVETIKKGIHDADAEARVEARKTYMGLRNHFPGEAETLYNSLEPSYQKSLQTYLKSSGSVASLPQSDRSSSSSQESLNRPFSSKWSTANPSTVAGRVSAGSSKASSLPGSLQRSRSDIDVNAAAGAKAHHAAGQSVRSGRLGAGALNAGSYASLEDTSDKLDGTASEDGRVRAKLSAPLAGMGNAKADSRGRSRTKMVSQSQPGSRSGSPGRVLTTTALSTVSSGVQRVLVNSASAQKRSKIPRSQGCSREASPSRLSVARSSRIPRPSVSQGCSREASRESSRDTSPVRSFQPLASRHHSRSTGALYAPEVYGASGPGYGISQSSRLSSSVSAMRVLNTGSDVEEAVADALKKPARRRYESYGMHSDDDANSDASSACSERSYSSRNGSIPTYMRQTEDVAEVLNRCASSNWSERKEGLLGLQNLLKNQRTLSRVELKRLCEIFTRMFADPHGKRVFSMFLETLVDFIQVHKDDLQDWLFVLLTQLLKKMGADLLGSVQAKVQKALDVTRESFPNDLQFNILMRFTVDQTQTPSLKVKVAILKYIETLAKQMDPGDFINSSETRLAVSRVITWTTEPKSSDVRKAAQSVLISLFELNTPEFTMLLGALPKTFQDGATKLLHNHLRNTGNGTQSSMGSPLTRPTPRSPANWSSPLTSPTNTSQNTLSPSAFDYDTENMNSEDIYSSLRGVTEAIQNFSFRSQEDMNEPLKRDSKKDDGDSMCGGPGMSDPRAGGDATDSSQTALDNKASLLHSMPTHSSPRSRDYNPYNYSDSISPFNKSALKEAMFDDDADQFPDDLSLDHSDLVAELLKELSNHNERVEERKIALYELMKLTQEESFSVWDEHFKTILLLLLETLGDKEPTIRALALKVLREILRHQPARFKNYAELTVMKTLEAHKDPHKEVVRSAEEAASVLATSISPEQCIKVLCPIIQTADYPINLAAIKMQTKVIERVSKETLNLLLPEIMPGLIQGYDNSESSVRKACVFCLVAVHAVIGDELKPHLSQLTGSKMKLLNLYIKRAQTGSGGADPTTDVSGQS.

Residues 1–61 (MAMGDDKSFD…KVGGASKEGG (61 aa)) are disordered. S8 and S14 each carry phosphoserine. The span at 47–61 (SAGGPKVGGASKEGG) shows a compositional bias: gly residues. Residues 60–311 (GGAGAVDEDD…KSLQTYLKSS (252 aa)) form a TOG 1 region. HEAT repeat units follow at residues 173-208 (HGAE…IRHT), 209-245 (HVPR…EWQT), and 250-287 (RHAA…HFPG). Residues 314–368 (VASLPQSDRSSSSSQESLNRPFSSKWSTANPSTVAGRVSAGSSKASSLPGSLQRS) form a disordered region. A phosphoserine mark is found at S316, S327, and S330. A compositionally biased stretch (low complexity) spans 316-334 (SLPQSDRSSSSSQESLNRP). Polar residues-rich tracts occupy residues 335–346 (FSSKWSTANPST) and 353–367 (AGSS…SLQR). A phosphoserine mark is found at S360, S368, S370, and S407. The segment at 409-467 (EDTSDKLDGTASEDGRVRAKLSAPLAGMGNAKADSRGRSRTKMVSQSQPGSRSGSPGRV) is disordered. Residues 411-425 (TSDKLDGTASEDGRV) are compositionally biased toward basic and acidic residues. The interaction with microtubules, MAPRE1 and MAPRE3 stretch occupies residues 444-580 (RGRSRTKMVS…GPGYGISQSS (137 aa)). Residues 453-467 (SQSQPGSRSGSPGRV) show a composition bias toward low complexity. Residues S455, S459, S463, S478, and S489 each carry the phosphoserine modification. The tract at residues 488–557 (ASAQKRSKIP…PLASRHHSRS (70 aa)) is disordered. The short motif at 494-497 (SKIP) is the SXIP motif 1; mediates interaction with MAPRE1 and targeting to microtubule plus ends element. Position 507 is a phosphoserine (S507). Residues 517–520 (SRIP) carry the SXIP motif 2; mediates interaction with MAPRE1 and targeting to microtubule plus ends motif. Residues S525, S529, S585, S587, S596, S621, and S627 each carry the phosphoserine modification. The interval 617 to 645 (YGMHSDDDANSDASSACSERSYSSRNGSI) is disordered. A compositionally biased stretch (low complexity) spans 627–641 (SDASSACSERSYSSR). Residues 649–881 (MRQTEDVAEV…TKLLHNHLRN (233 aa)) form a TOG 2 region. HEAT repeat units follow at residues 710–747 (RVFS…KMGA) and 772–809 (LQFN…QMDP). T787 carries the post-translational modification Phosphothreonine. The interval 872-1294 (TKLLHNHLRN…DPTTDVSGQS (423 aa)) is interaction with RSN and localization to the Golgi and kinetochores. Disordered stretches follow at residues 878–928 (HLRN…FDYD) and 952–995 (SFRS…DSSQ). Composition is skewed to polar residues over residues 880–892 (RNTG…SMGS) and 901–922 (SPAN…TLSP). S892 carries the phosphoserine modification. 4 positions are modified to phosphoserine: S952, S955, S1013, and S1029. Residues 955–972 (SQEDMNEPLKRDSKKDDG) show a composition bias toward basic and acidic residues. Positions 1017 to 1294 (RDYNPYNYSD…DPTTDVSGQS (278 aa)) are required for cortical localization. HEAT repeat units follow at residues 1054 to 1091 (LDHS…TQEE), 1098 to 1135 (EHFK…HQPA), and 1216 to 1253 (LLLP…VIGD).

The protein belongs to the CLASP family. In terms of assembly, interacts with microtubules. Interacts with MAPRE1; probably required for targeting to the growing microtubule plus ends. Interacts with CLIP2, ERC1, MAPRE3, PHLDB2 and RSN. The interaction with ERC1 may be mediated by PHLDB2. Interacts with GCC2; recruits CLASP2 to Golgi membranes. Interacts with MACF1. Interacts with mtcl2 and MTCL1. In terms of processing, phosphorylated by GSK3B. Phosphorylation reduces MAPRE1 binding. Phosphorylation by GSK3B may negatively regulate binding to microtubule lattices in lamella. As to expression, brain-specific.

The protein resides in the cytoplasm. It is found in the cytoskeleton. It localises to the microtubule organizing center. The protein localises to the centrosome. Its subcellular location is the chromosome. The protein resides in the centromere. It is found in the kinetochore. It localises to the spindle. The protein localises to the golgi apparatus. Its subcellular location is the trans-Golgi network. The protein resides in the cell membrane. It is found in the cell projection. It localises to the ruffle membrane. The protein localises to the cell cortex. Functionally, microtubule plus-end tracking protein that promotes the stabilization of dynamic microtubules. Involved in the nucleation of noncentrosomal microtubules originating from the trans-Golgi network (TGN). Required for the polarization of the cytoplasmic microtubule arrays in migrating cells towards the leading edge of the cell. May act at the cell cortex to enhance the frequency of rescue of depolymerizing microtubules by attaching their plus-ends to cortical platforms composed of ERC1 and PHLDB2. This cortical microtubule stabilizing activity is regulated at least in part by phosphatidylinositol 3-kinase signaling. Also performs a similar stabilizing function at the kinetochore which is essential for the bipolar alignment of chromosomes on the mitotic spindle. Acts as a mediator of ERBB2-dependent stabilization of microtubules at the cell cortex. This Homo sapiens (Human) protein is CLIP-associating protein 2 (CLASP2).